The sequence spans 122 residues: MIQMQTNLDVADNSGARRVMCIKVLGGSKRKYASVGDIIVVSIKEAIPRGRVKKGDVMKAVVVRTAKDIRRADGSVIRFDNNAAVLIDNKKEPIGSRIFGPVPRELRAKNHMKIISLAPEVL.

This sequence belongs to the universal ribosomal protein uL14 family. In terms of assembly, part of the 50S ribosomal subunit. Forms a cluster with proteins L3 and L19. In the 70S ribosome, L14 and L19 interact and together make contacts with the 16S rRNA in bridges B5 and B8.

Functionally, binds to 23S rRNA. Forms part of two intersubunit bridges in the 70S ribosome. In Allorhizobium ampelinum (strain ATCC BAA-846 / DSM 112012 / S4) (Agrobacterium vitis (strain S4)), this protein is Large ribosomal subunit protein uL14.